The primary structure comprises 337 residues: Movement protein (337 aa).

Over residues 1-11 (MAGLWRSNSTL) the composition is skewed to polar residues. Disordered stretches follow at residues 1–24 (MAGL…QTET) and 273–337 (SVVR…VRQT).

The protein resides in the host cell junction. Its subcellular location is the host plasmodesma. Its function is as follows. Transports viral genome to neighboring plant cells directly through plasmosdesmata, without any budding. The movement protein allows efficient cell to cell propagation, by bypassing the host cell wall barrier. Acts by forming a tubular structure at the host plasmodesmata, enlarging it enough to allow free passage of virion capsids. The sequence is that of Movement protein from Olive latent virus 2 (isolate Italy) (OLV-2).